The following is a 207-amino-acid chain: Cytochrome c biogenesis ATP-binding export protein CcmA 1 (207 aa).

In terms of domain architecture, ABC transporter spans 6–207 (LEALDLAGVR…KTSQTVRMGA (202 aa)). 38 to 45 (GENGSGKT) contributes to the ATP binding site.

It belongs to the ABC transporter superfamily. CcmA exporter (TC 3.A.1.107) family. The complex is composed of two ATP-binding proteins (CcmA) and two transmembrane proteins (CcmB).

Its subcellular location is the cell inner membrane. It carries out the reaction heme b(in) + ATP + H2O = heme b(out) + ADP + phosphate + H(+). In terms of biological role, part of the ABC transporter complex CcmAB involved in the biogenesis of c-type cytochromes; once thought to export heme, this seems not to be the case, but its exact role is uncertain. Responsible for energy coupling to the transport system. The polypeptide is Cytochrome c biogenesis ATP-binding export protein CcmA 1 (Cupriavidus metallidurans (strain ATCC 43123 / DSM 2839 / NBRC 102507 / CH34) (Ralstonia metallidurans)).